Consider the following 95-residue polypeptide: Aspartyl/glutamyl-tRNA(Asn/Gln) amidotransferase subunit C (95 aa).

The protein belongs to the GatC family. Heterotrimer of A, B and C subunits.

It carries out the reaction L-glutamyl-tRNA(Gln) + L-glutamine + ATP + H2O = L-glutaminyl-tRNA(Gln) + L-glutamate + ADP + phosphate + H(+). The catalysed reaction is L-aspartyl-tRNA(Asn) + L-glutamine + ATP + H2O = L-asparaginyl-tRNA(Asn) + L-glutamate + ADP + phosphate + 2 H(+). Allows the formation of correctly charged Asn-tRNA(Asn) or Gln-tRNA(Gln) through the transamidation of misacylated Asp-tRNA(Asn) or Glu-tRNA(Gln) in organisms which lack either or both of asparaginyl-tRNA or glutaminyl-tRNA synthetases. The reaction takes place in the presence of glutamine and ATP through an activated phospho-Asp-tRNA(Asn) or phospho-Glu-tRNA(Gln). This chain is Aspartyl/glutamyl-tRNA(Asn/Gln) amidotransferase subunit C, found in Paracoccus denitrificans (strain Pd 1222).